We begin with the raw amino-acid sequence, 222 residues long: Imidazoleglycerol-phosphate dehydratase (222 aa).

The protein belongs to the imidazoleglycerol-phosphate dehydratase family.

The catalysed reaction is D-erythro-1-(imidazol-4-yl)glycerol 3-phosphate = 3-(imidazol-4-yl)-2-oxopropyl phosphate + H2O. It participates in amino-acid biosynthesis; L-histidine biosynthesis; L-histidine from 5-phospho-alpha-D-ribose 1-diphosphate: step 6/9. The polypeptide is Imidazoleglycerol-phosphate dehydratase (HIS3) (Scheffersomyces stipitis (strain ATCC 58785 / CBS 6054 / NBRC 10063 / NRRL Y-11545) (Yeast)).